The sequence spans 107 residues: YcgL domain-containing protein Psyc_0800 (107 aa).

In terms of domain architecture, YcgL spans 1-95 (MHCDIYKFLK…QDVMRRQAEL (95 aa)).

The protein is YcgL domain-containing protein Psyc_0800 of Psychrobacter arcticus (strain DSM 17307 / VKM B-2377 / 273-4).